The primary structure comprises 194 residues: Oligoribonuclease (194 aa).

One can recognise an Exonuclease domain in the interval 11–174 (LIWIDLEMTG…SDVRDSIDEL (164 aa)). The active site involves Y132.

This sequence belongs to the oligoribonuclease family.

It localises to the cytoplasm. 3'-to-5' exoribonuclease specific for small oligoribonucleotides. The protein is Oligoribonuclease of Xanthomonas euvesicatoria pv. vesicatoria (strain 85-10) (Xanthomonas campestris pv. vesicatoria).